The chain runs to 306 residues: Ribosomal protein L11 methyltransferase (306 aa).

S-adenosyl-L-methionine contacts are provided by T154, G179, D201, and N242.

The protein belongs to the methyltransferase superfamily. PrmA family.

It is found in the cytoplasm. The catalysed reaction is L-lysyl-[protein] + 3 S-adenosyl-L-methionine = N(6),N(6),N(6)-trimethyl-L-lysyl-[protein] + 3 S-adenosyl-L-homocysteine + 3 H(+). Its function is as follows. Methylates ribosomal protein L11. In Xylella fastidiosa (strain 9a5c), this protein is Ribosomal protein L11 methyltransferase.